The sequence spans 793 residues: MSCKVRLMEDGSLDEEPLTLKEIAYQKLCNNLDIISSHRPDGQRGLNPGIVLPNEICDGFLENYQRFNRPLDDSVIRLFEDTHRTSLKIVNLRNSTLSSIGLETLMRHKLFALSLWYCDMISVGSHHLLAHYGDSLRSLELGISSHLLQYAEPNEKEPVDFQLTCPHLRRLVLNGVVMHHRLQFAHLHDLGHLDLTSCVLANFSLEALGSLPNLHTLILFNVWPIANQLHAICCLRRLCTLDISISSSGNGHGTYDLPDQTLEMLMDNLRHLTHLDISGTNLAGNGVATKESTTTSGMQQSPKMEQHFALTDIPGLASRTQRPLQFLGLYHTAHWACKRHDIPALEVAGDANEQQILTAARYYHDRPVLLTRVLNDLYHLFRFENCKDIHTALDVVLSAMDRHLKFKHMQISGSATLFYIVKGRDRSKFGALLRNHIIRTLLNGMEMHITDDTMLRNGYLTLTQFHMPVDVLFEYERLIKILLHGVSKTEQEGFVQRIAIYLLNTLACQVDGRQKLFLGELGVVSTMFTLIKDRLTRSVFDDVMEVAWSTMWNVTDETAINCKRFLDGRGMEYFLKCLHTFPDRDELLRNMMGLLGNVAEVKWLRPKLMTQEFIEVFARLLDSLSDGIEVGGASASVVARVREREMASANHAYLRFQVSYNAAGVLAHIASDGADAWTIKTPSREHVLERMVAAIQRWNIKSERNINYRSFEPILSLVRCYETPQCQHWAVWALANLTQVYPEKYCKLVEQENGIQILNELIEHESPYCEIKRIARLVIEQCDSGSERMVVDG.

LRR repeat units lie at residues 84-108 (RTSLKIVNLRNSTLSSIGLETLMRH), 187-210 (LHDLGHLDLTSCVLANFSLEALGS), and 269-294 (LRHLTHLDISGTNLAGNGVATKESTT).

It belongs to the zyg-11 family.

Functionally, serves as substrate adapter subunit in an E3 ubiquitin ligase complex CG12084-cul-2-elongin BC. Targets substrates bearing N-terminal glycine degrons for proteasomal degradation. The sequence is that of Protein zer-1 homolog from Drosophila melanogaster (Fruit fly).